Reading from the N-terminus, the 263-residue chain is 4-hydroxy-2-oxo-heptane-1,7-dioate aldolase (263 aa).

The active-site Proton acceptor is His45. Gln147 lines the substrate pocket. Glu149 serves as a coordination point for a divalent metal cation. 2 residues coordinate substrate: Ala174 and Asp175. A divalent metal cation is bound at residue Asp175.

The protein belongs to the HpcH/HpaI aldolase family. In terms of assembly, homohexamer; trimer of dimers. The cofactor is a divalent metal cation.

The enzyme catalyses 4-hydroxy-2-oxoheptanedioate = succinate semialdehyde + pyruvate. It functions in the pathway aromatic compound metabolism; 4-hydroxyphenylacetate degradation; pyruvate and succinate semialdehyde from 4-hydroxyphenylacetate: step 7/7. Its function is as follows. Catalyzes the reversible retro-aldol cleavage of 4-hydroxy-2-ketoheptane-1,7-dioate (HKHD) to pyruvate and succinic semialdehyde. The polypeptide is 4-hydroxy-2-oxo-heptane-1,7-dioate aldolase (Salmonella paratyphi A (strain ATCC 9150 / SARB42)).